Reading from the N-terminus, the 423-residue chain is Mannose-6-phosphate isomerase (423 aa).

Position 2 is an N-acetylalanine (A2). A phosphoserine mark is found at S102 and S108. Zn(2+)-binding residues include Q110, H112, E137, and H276. R295 is an active-site residue.

Belongs to the mannose-6-phosphate isomerase type 1 family. The cofactor is Zn(2+).

Its subcellular location is the cytoplasm. The enzyme catalyses D-mannose 6-phosphate = D-fructose 6-phosphate. It functions in the pathway nucleotide-sugar biosynthesis; GDP-alpha-D-mannose biosynthesis; alpha-D-mannose 1-phosphate from D-fructose 6-phosphate: step 1/2. In terms of biological role, isomerase that catalyzes the interconversion of fructose-6-P and mannose-6-P and has a critical role in the supply of D-mannose derivatives required for many eukaryotic glycosylation reactions. The protein is Mannose-6-phosphate isomerase (MPI) of Pan troglodytes (Chimpanzee).